The chain runs to 328 residues: Malate dehydrogenase (328 aa).

11–17 contacts NAD(+); that stretch reads GAAGQIG. Positions 92 and 98 each coordinate substrate. Residues N105, Q112, and 129-131 each bind NAD(+); that span reads TGN. N131 and R162 together coordinate substrate. The active-site Proton acceptor is H187.

The protein belongs to the LDH/MDH superfamily. MDH type 2 family.

The enzyme catalyses (S)-malate + NAD(+) = oxaloacetate + NADH + H(+). Catalyzes the reversible oxidation of malate to oxaloacetate. The sequence is that of Malate dehydrogenase from Paenarthrobacter aurescens (strain TC1).